Reading from the N-terminus, the 113-residue chain is U11-theraphotoxin-Hhn1u (113 aa).

Residues 1–21 (MNTVRVTFLLVFVLAVSLGQA) form the signal peptide. A propeptide spanning residues 22-74 (DKDENRMEMQEKTEQGKSYLDFAENLLLQKLEELEAKLLEEDSEESRNSRQKR) is cleaved from the precursor. 3 disulfide bridges follow: C75–C90, C82–C95, and C89–C110.

This sequence belongs to the neurotoxin 14 (magi-1) family. 01 (HNTX-16) subfamily. Expressed by the venom gland.

It localises to the secreted. Probable ion channel inhibitor. The protein is U11-theraphotoxin-Hhn1u of Cyriopagopus hainanus (Chinese bird spider).